The sequence spans 161 residues: Putative defense protein 2 (161 aa).

An N-terminal signal peptide occupies residues 1–11 (LSWSALALTSA). The Reelin domain occupies 12–161 (YPTGAPTSAC…SAPVKILSHH (150 aa)). An intrachain disulfide couples Cys21 to Cys98. The N-linked (GlcNAc...) asparagine glycan is linked to Asn91.

This sequence belongs to the insect defense protein family.

The protein localises to the secreted. In terms of biological role, may have antimicrobial activity. This is Putative defense protein 2 from Antheraea mylitta (Tasar silkworm).